A 129-amino-acid polypeptide reads, in one-letter code: Large ribosomal subunit protein uL22 (129 aa).

The protein belongs to the universal ribosomal protein uL22 family. Part of the 50S ribosomal subunit.

Functionally, this protein binds specifically to 23S rRNA; its binding is stimulated by other ribosomal proteins, e.g. L4, L17, and L20. It is important during the early stages of 50S assembly. It makes multiple contacts with different domains of the 23S rRNA in the assembled 50S subunit and ribosome. Its function is as follows. The globular domain of the protein is located near the polypeptide exit tunnel on the outside of the subunit, while an extended beta-hairpin is found that lines the wall of the exit tunnel in the center of the 70S ribosome. The sequence is that of Large ribosomal subunit protein uL22 from Brucella abortus (strain 2308).